A 911-amino-acid polypeptide reads, in one-letter code: Inositol 1,4,5-triphosphate receptor associated 1 (911 aa).

Over residues 1–11 the composition is skewed to basic and acidic residues; sequence MVKAPQSEERL. Disordered regions lie at residues 1–21, 39–122, 174–405, and 478–498; these read MVKA…NNSV, EVPG…HRHL, LTRR…GPRL, and EQEK…ESKG. A compositionally biased stretch (polar residues) spans 68–86; sequence AAQSPAGQDPATTGISCSP. The span at 111-122 shows a compositional bias: basic residues; sequence HSPHRRLSHRHL. Ser-118 bears the Phosphoserine mark. The tract at residues 152-184 is interaction with PRKG1; sequence SEEDKKKNLALLEEAKLVSERFLTRRGRKSRSS. Residues 183-212 show a composition bias toward polar residues; that stretch reads SSPGESSPAVSPNLSPGASPASSQSNSLTV. Basic and acidic residues predominate over residues 277 to 292; it reads TVEKSKEITIEQKENF. The residue at position 393 (Ser-393) is a Phosphoserine. Positions 534 to 580 are interaction with ITPR1; the sequence is NVFVQLSLAFRNDSYTLESRINQAERERNLTEENTEKELENFKASIT. Residues 547 to 645 adopt a coiled-coil conformation; sequence SYTLESRINQ…MQYVENLKRT (99 aa). Ser-683 and Ser-696 each carry phosphoserine. 2 disordered regions span residues 706–766 and 787–829; these read LNLP…TPSC and YQEG…KEQR. Residues 708–728 are compositionally biased toward low complexity; it reads LPGQSPSSSPIPSLPALSESS. Basic and acidic residues predominate over residues 790–801; the sequence is GLKKTKELQGLR. Acidic residues predominate over residues 802-825; sequence EEEEEQKSESPEEPEEVAETEEEE. A helical transmembrane segment spans residues 853 to 873; it reads VIWMMAAAMLVLTVVLGLYGS.

Interacts with PRKG1/cGKI-beta and ITPR1/IP3R type I. Part of cGMP kinase signaling complex at least composed of ACTA2/alpha-actin, CNN1/calponin H1, PLN/phospholamban, PRKG1 and ITPR1. Interacts with HCN4; regulates HCN4 channel activity. In terms of processing, phosphorylated by PRKG1/cGKI-beta. Phosphorylation at Ser-696 is necessary for PRKG1-induced calcium release in the cytosol. In terms of tissue distribution, highly expressed in trachea, aorta and uterus.

The protein localises to the sarcoplasmic reticulum. Its subcellular location is the cytoplasm. It is found in the perinuclear region. The protein resides in the membrane. Its function is as follows. Plays a role as NO/PRKG1-dependent regulator of IP3-induced calcium release; its phosphorylation by PRKG1 inhibits bradykinin and IP3-induced calcium release from intracellular stores. Recruits PRKG1 to the endoplasmic reticulum and may mediate the assembly of PRKG1 and ITPR1 in a macrocomplex. Involved in PRKG1 signaling cascade leading to inhibition of platelet activation and aggregation. Also mediates NO-dependent inhibition of calcium signaling in gastrointestinal smooth muscle contributing to NO-dependent relaxation. Plays a role in the regulation of cellular excitability by regulating the hyperpolarization-activated cyclic nucleotide-gated HCN4 channel activity. The chain is Inositol 1,4,5-triphosphate receptor associated 1 (IRAG1) from Bos taurus (Bovine).